Reading from the N-terminus, the 160-residue chain is Putative pre-16S rRNA nuclease (160 aa).

This sequence belongs to the YqgF nuclease family.

The protein localises to the cytoplasm. Its function is as follows. Could be a nuclease involved in processing of the 5'-end of pre-16S rRNA. The protein is Putative pre-16S rRNA nuclease of Cereibacter sphaeroides (strain ATCC 17029 / ATH 2.4.9) (Rhodobacter sphaeroides).